A 455-amino-acid polypeptide reads, in one-letter code: Chromosomal replication initiator protein DnaA (455 aa).

The domain I, interacts with DnaA modulators stretch occupies residues 1–73; sequence METSLETLWS…RDVVHEILGH (73 aa). The segment at 73–116 is domain II; that stretch reads HPVEIQIEIAQGDSNATISAPEVASPPPTASPVENTNTSQRQQA. Positions 92–116 are disordered; sequence APEVASPPPTASPVENTNTSQRQQA. Residues 104–116 show a composition bias toward polar residues; the sequence is PVENTNTSQRQQA. The interval 117–333 is domain III, AAA+ region; sequence SLNPKYVFSR…GALIRAVAYI (217 aa). Residues G161, G163, K164, and T165 each coordinate ATP. Residues 334-455 are domain IV, binds dsDNA; sequence SISGLPMNVE…GDRIKLANQP (122 aa).

The protein belongs to the DnaA family. Oligomerizes as a right-handed, spiral filament on DNA at oriC.

The protein localises to the cytoplasm. Plays an essential role in the initiation and regulation of chromosomal replication. ATP-DnaA binds to the origin of replication (oriC) to initiate formation of the DNA replication initiation complex once per cell cycle. Binds the DnaA box (a 9 base pair repeat at the origin) and separates the double-stranded (ds)DNA. Forms a right-handed helical filament on oriC DNA; dsDNA binds to the exterior of the filament while single-stranded (ss)DNA is stabiized in the filament's interior. The ATP-DnaA-oriC complex binds and stabilizes one strand of the AT-rich DNA unwinding element (DUE), permitting loading of DNA polymerase. After initiation quickly degrades to an ADP-DnaA complex that is not apt for DNA replication. Binds acidic phospholipids. This is Chromosomal replication initiator protein DnaA from Acaryochloris marina (strain MBIC 11017).